Reading from the N-terminus, the 432-residue chain is Glutamate-1-semialdehyde 2,1-aminomutase (432 aa).

Position 269 is an N6-(pyridoxal phosphate)lysine (lysine 269).

It belongs to the class-III pyridoxal-phosphate-dependent aminotransferase family. HemL subfamily. Homodimer. Requires pyridoxal 5'-phosphate as cofactor.

Its subcellular location is the cytoplasm. It catalyses the reaction (S)-4-amino-5-oxopentanoate = 5-aminolevulinate. It participates in porphyrin-containing compound metabolism; protoporphyrin-IX biosynthesis; 5-aminolevulinate from L-glutamyl-tRNA(Glu): step 2/2. The polypeptide is Glutamate-1-semialdehyde 2,1-aminomutase (Desulforudis audaxviator (strain MP104C)).